A 115-amino-acid chain; its full sequence is Small ribosomal subunit protein bS6 (115 aa).

The protein belongs to the bacterial ribosomal protein bS6 family.

Binds together with bS18 to 16S ribosomal RNA. This is Small ribosomal subunit protein bS6 from Picosynechococcus sp. (strain ATCC 27264 / PCC 7002 / PR-6) (Agmenellum quadruplicatum).